Here is a 225-residue protein sequence, read N- to C-terminus: Cytochrome c oxidase subunit 2 (225 aa).

Residues 1 to 25 (MSTWMMFMFQESNSLYADNLVSFHN) are Mitochondrial intermembrane-facing. Residues 26-47 (MVMIIVIMISTLTVYIIFDLFL) form a helical membrane-spanning segment. Residues 48–62 (NKFSNLYLLKNHNIE) are Mitochondrial matrix-facing. A helical transmembrane segment spans residues 63–82 (IIWMIVPIVILLIICFPSLK). Residues 83-225 (ILYLIDEIVN…YFMNWIYKMN (143 aa)) are Mitochondrial intermembrane-facing. Cu cation is bound by residues H159, C194, E196, C198, H202, and M205. Mg(2+) is bound at residue E196.

This sequence belongs to the cytochrome c oxidase subunit 2 family. Component of the cytochrome c oxidase (complex IV, CIV), a multisubunit enzyme composed of a catalytic core of 3 subunits and several supernumerary subunits. The complex exists as a monomer or a dimer and forms supercomplexes (SCs) in the inner mitochondrial membrane with ubiquinol-cytochrome c oxidoreductase (cytochrome b-c1 complex, complex III, CIII). It depends on Cu cation as a cofactor.

The protein localises to the mitochondrion inner membrane. It carries out the reaction 4 Fe(II)-[cytochrome c] + O2 + 8 H(+)(in) = 4 Fe(III)-[cytochrome c] + 2 H2O + 4 H(+)(out). In terms of biological role, component of the cytochrome c oxidase, the last enzyme in the mitochondrial electron transport chain which drives oxidative phosphorylation. The respiratory chain contains 3 multisubunit complexes succinate dehydrogenase (complex II, CII), ubiquinol-cytochrome c oxidoreductase (cytochrome b-c1 complex, complex III, CIII) and cytochrome c oxidase (complex IV, CIV), that cooperate to transfer electrons derived from NADH and succinate to molecular oxygen, creating an electrochemical gradient over the inner membrane that drives transmembrane transport and the ATP synthase. Cytochrome c oxidase is the component of the respiratory chain that catalyzes the reduction of oxygen to water. Electrons originating from reduced cytochrome c in the intermembrane space (IMS) are transferred via the dinuclear copper A center (CU(A)) of subunit 2 and heme A of subunit 1 to the active site in subunit 1, a binuclear center (BNC) formed by heme A3 and copper B (CU(B)). The BNC reduces molecular oxygen to 2 water molecules using 4 electrons from cytochrome c in the IMS and 4 protons from the mitochondrial matrix. The chain is Cytochrome c oxidase subunit 2 (COII) from Apis florea (Dwarf honeybee).